A 608-amino-acid chain; its full sequence is Albumin (608 aa).

A signal peptide spans 1–18 (MKWVTFLLLLFVSGSAFS). Positions 19-24 (RGVFRR) are excised as a propeptide. Albumin domains follow at residues 19–211 (RGVF…GVKE), 212–403 (KALV…EFQP), and 404–601 (LVEE…NLVT). Histidine 27 contacts Cu cation. Serine 29 carries the post-translational modification Phosphoserine. Residues glutamate 30 and aspartate 37 each coordinate Ca(2+). A disulfide bridge links cysteine 77 with cysteine 86. A phosphoserine mark is found at serine 82 and serine 89. Histidine 91 is a binding site for Zn(2+). 6 disulfides stabilise this stretch: cysteine 99–cysteine 115, cysteine 114–cysteine 125, cysteine 148–cysteine 193, cysteine 192–cysteine 201, cysteine 224–cysteine 270, and cysteine 269–cysteine 277. Position 229 is an N6-succinyllysine (lysine 229). Residue glutamate 268 participates in Ca(2+) binding. Zn(2+)-binding residues include histidine 271 and aspartate 273. Aspartate 273, glutamate 276, and aspartate 279 together coordinate Ca(2+). 8 disulfide bridges follow: cysteine 289-cysteine 303, cysteine 302-cysteine 313, cysteine 340-cysteine 385, cysteine 384-cysteine 393, cysteine 416-cysteine 462, cysteine 461-cysteine 472, cysteine 485-cysteine 501, and cysteine 500-cysteine 511. Phosphoserine is present on serine 297. Serine 443 carries the post-translational modification Phosphoserine. Residues threonine 444 and threonine 446 each carry the phosphothreonine modification. Position 460 is an N6-succinyllysine (lysine 460). Serine 513 carries the post-translational modification Phosphoserine. Intrachain disulfides connect cysteine 538–cysteine 583 and cysteine 582–cysteine 591. Lysine 543 bears the N6-succinyllysine mark. N6-methyllysine is present on lysine 558. Threonine 570 bears the Phosphothreonine mark. Position 588 is an N6-succinyllysine (lysine 588).

It belongs to the ALB/AFP/VDB family. Part of a complex composed of complement component C3, CLCA1/CLCA3, A2ML1/OH and ALB/serum albumin. Interacts with FCGRT; this interaction regulates ALB homeostasis. Interacts with TASOR. In plasma, occurs in a covalently-linked complex with chromophore-bound alpha-1-microglobulin; this interaction does not prevent fatty acid binding to ALB. In terms of processing, phosphorylated by FAM20C in the extracellular medium. As to expression, plasma. Expressed in the granular cells within the cerebellum.

The protein resides in the secreted. Binds water, Ca(2+), Na(+), K(+), fatty acids, hormones, bilirubin and drugs. Its main function is the regulation of the colloidal osmotic pressure of blood. Major zinc transporter in plasma, typically binds about 80% of all plasma zinc. Major calcium and magnesium transporter in plasma, binds approximately 45% of circulating calcium and magnesium in plasma. Potentially has more than two calcium-binding sites and might additionally bind calcium in a non-specific manner. The shared binding site between zinc and calcium at residue Asp-273 suggests a crosstalk between zinc and calcium transport in the blood. The rank order of affinity is zinc &gt; calcium &gt; magnesium. Binds to the bacterial siderophore enterobactin and inhibits enterobactin-mediated iron uptake of E.coli from ferric transferrin, and may thereby limit the utilization of iron and growth of enteric bacteria such as E.coli. Does not prevent iron uptake by the bacterial siderophore aerobactin. In Mus musculus (Mouse), this protein is Albumin (Alb).